The following is a 967-amino-acid chain: Translation initiation factor IF-2 (967 aa).

Residues 34 to 363 (ASSTVEPPVA…APAVGGVSVP (330 aa)) form a disordered region. 2 stretches are compositionally biased toward low complexity: residues 51 to 96 (PAGG…GNAA) and 103 to 154 (ASEA…TPGP). Positions 184 to 196 (RSEGGAQRGGPRP) are enriched in gly residues. Low complexity predominate over residues 197–206 (GGQQRSGKPG). Residues 300–333 (PRRGGGPGGGPGGGGGFRGRGGRGGTQGAFGRGG) show a composition bias toward gly residues. Positions 334–345 (ARGKHRKSKRAK) are enriched in basic residues. Residues 460 to 632 (PRPPVVTVMG…IVLTADGALE (173 aa)) enclose the tr-type G domain. The G1 stretch occupies residues 469 to 476 (GHVDHGKT). Residue 469-476 (GHVDHGKT) participates in GTP binding. Residues 494–498 (GITQH) are G2. The G3 stretch occupies residues 519-522 (DTPG). Residues 519–523 (DTPGH) and 573–576 (NKVD) each bind GTP. Residues 573–576 (NKVD) are G4. A G5 region spans residues 609–611 (SAR).

This sequence belongs to the TRAFAC class translation factor GTPase superfamily. Classic translation factor GTPase family. IF-2 subfamily.

The protein resides in the cytoplasm. Its function is as follows. One of the essential components for the initiation of protein synthesis. Protects formylmethionyl-tRNA from spontaneous hydrolysis and promotes its binding to the 30S ribosomal subunits. Also involved in the hydrolysis of GTP during the formation of the 70S ribosomal complex. This is Translation initiation factor IF-2 from Kocuria rhizophila (strain ATCC 9341 / DSM 348 / NBRC 103217 / DC2201).